Consider the following 709-residue polypeptide: ATP-binding cassette sub-family F member 3 (709 aa).

Position 2 is an N-acetylalanine (Ala2). Position 83 is a phosphoserine (Ser83). Residues 129–143 (RLKAKQEKRSEKETL) show a composition bias toward basic and acidic residues. A disordered region spans residues 129 to 171 (RLKAKQEKRSEKETLKTSNPLVLEEASASQAGSRKESRLESSG). Phosphoserine is present on residues Ser155, Ser157, and Ser161. Basic and acidic residues predominate over residues 161 to 171 (SRKESRLESSG). 2 consecutive ABC transporter domains span residues 178–424 (VRIE…LNQQ) and 492–707 (LQLD…RREG). 210–217 (GRNGLGKT) lines the ATP pocket. Phosphoserine is present on Ser283. 525–532 (GENGAGKS) provides a ligand contact to ATP.

This sequence belongs to the ABC transporter superfamily. ABCF family. EF3 subfamily.

Displays an antiviral effect against flaviviruses such as west Nile virus (WNV) in the presence of OAS1B. This chain is ATP-binding cassette sub-family F member 3 (Abcf3), found in Mus musculus (Mouse).